The primary structure comprises 254 residues: Putative epimerase LsrE (254 aa).

Residues 14 to 34 (VALLASYPLSVGILAGQWIAL) form a helical membrane-spanning segment. A divalent metal cation-binding residues include His50, Asp52, and His81. Residue Asp52 is the Proton acceptor of the active site. Substrate contacts are provided by residues His81, 166-169 (GYGS), 199-201 (DGS), and 221-222 (GS). Asp199 contacts a divalent metal cation. Asp199 functions as the Proton donor in the catalytic mechanism.

It belongs to the ribulose-phosphate 3-epimerase family. A divalent metal cation is required as a cofactor.

It is found in the cell membrane. The sequence is that of Putative epimerase LsrE (lsrE) from Salmonella choleraesuis (strain SC-B67).